The chain runs to 555 residues: CTP synthase (555 aa).

The interval methionine 1–isoleucine 265 is amidoligase domain. A CTP-binding site is contributed by serine 13. Residue serine 13 participates in UTP binding. ATP is bound by residues serine 14–isoleucine 19 and aspartate 71. Positions 71 and 139 each coordinate Mg(2+). CTP contacts are provided by residues aspartate 146–glutamate 148, lysine 186–glutamine 191, and lysine 222. Residues lysine 186–glutamine 191 and lysine 222 each bind UTP. Residues threonine 290–alanine 541 enclose the Glutamine amidotransferase type-1 domain. An L-glutamine-binding site is contributed by glycine 351. Cysteine 378 (nucleophile; for glutamine hydrolysis) is an active-site residue. Residues leucine 379–glutamine 382, glutamate 402, and arginine 469 each bind L-glutamine. Active-site residues include histidine 514 and glutamate 516.

The protein belongs to the CTP synthase family. In terms of assembly, homotetramer.

The catalysed reaction is UTP + L-glutamine + ATP + H2O = CTP + L-glutamate + ADP + phosphate + 2 H(+). It carries out the reaction L-glutamine + H2O = L-glutamate + NH4(+). It catalyses the reaction UTP + NH4(+) + ATP = CTP + ADP + phosphate + 2 H(+). It functions in the pathway pyrimidine metabolism; CTP biosynthesis via de novo pathway; CTP from UDP: step 2/2. Its activity is regulated as follows. Allosterically activated by GTP, when glutamine is the substrate; GTP has no effect on the reaction when ammonia is the substrate. The allosteric effector GTP functions by stabilizing the protein conformation that binds the tetrahedral intermediate(s) formed during glutamine hydrolysis. Inhibited by the product CTP, via allosteric rather than competitive inhibition. Functionally, catalyzes the ATP-dependent amination of UTP to CTP with either L-glutamine or ammonia as the source of nitrogen. Regulates intracellular CTP levels through interactions with the four ribonucleotide triphosphates. The polypeptide is CTP synthase (Coxiella burnetii (strain RSA 493 / Nine Mile phase I)).